Here is a 334-residue protein sequence, read N- to C-terminus: NAD-dependent protein deacetylase sirtuin-3 (334 aa).

One can recognise a Deacetylase sirtuin-type domain in the interval 53-315; that stretch reads SSEKKFSLQD…ERLVDLLGWT (263 aa). Lys57 is modified (N6-succinyllysine). NAD(+) is bound by residues 80–100 and 163–166; these read GAGI…SGLY and QNID. His183 (proton acceptor) is an active-site residue. 4 residues coordinate Zn(2+): Cys191, Cys194, Cys215, and Cys218. Residues 254–256 and 279–281 contribute to the NAD(+) site; these read GTS and NRD.

The protein belongs to the sirtuin family. Class I subfamily. As to quaternary structure, upon metabolic stress, forms a complex composed of FOXO3, SIRT3 and mitochondrial RNA polymerase POLRMT; the complex is recruited to mtDNA in a SIRT3-dependent manner. Also forms a complex composed of FOXO3, SIRT3, TFAM and POLRMT. Interacts with NDUFA9, ACSS1, IDH2 and GDH. Interacts with PCCA. It depends on Zn(2+) as a cofactor. As to expression, expressed in cardiomyocytes (at protein level). Expressed in the brain, liver, kidney and testes. Expressed in skeletal muscles (at protein level).

It localises to the mitochondrion matrix. It is found in the cytoplasm. The catalysed reaction is N(6)-acetyl-L-lysyl-[protein] + NAD(+) + H2O = 2''-O-acetyl-ADP-D-ribose + nicotinamide + L-lysyl-[protein]. It carries out the reaction N(6)-[(S)-lactoyl]-L-lysyl-[protein] + NAD(+) + H2O = 2''-O-(S)-lactoyl-ADP-D-ribose + nicotinamide + L-lysyl-[protein]. NAD-dependent protein deacetylase. Activates or deactivates mitochondrial target proteins by deacetylating key lysine residues. Known targets include ACSS1, IDH, GDH, PDHA1, SOD2, LCAD, SDHA, MRPL12 and the ATP synthase subunit ATP5PO. Contributes to the regulation of the cellular energy metabolism. Important for regulating tissue-specific ATP levels. In response to metabolic stress, deacetylates transcription factor FOXO3 and recruits FOXO3 and mitochondrial RNA polymerase POLRMT to mtDNA to promote mtDNA transcription. Acts as a regulator of ceramide metabolism by mediating deacetylation of ceramide synthases CERS1, CERS2 and CERS6, thereby increasing their activity and promoting mitochondrial ceramide accumulation. Regulates hepatic lipogenesis. Uses NAD(+) substrate imported by SLC25A47, triggering downstream activation of PRKAA1/AMPK-alpha signaling cascade that ultimately downregulates sterol regulatory element-binding protein (SREBP) transcriptional activities and ATP-consuming lipogenesis to restore cellular energy balance. In addition to protein deacetylase activity, also acts as a protein-lysine deacylase by mediating delactylation of proteins, such as CCNE2 and 'Lys-16' of histone H4 (H4K16la). This chain is NAD-dependent protein deacetylase sirtuin-3, found in Mus musculus (Mouse).